The sequence spans 273 residues: Dermonecrotic toxin LapSicTox-alphaII1 (273 aa).

The active site involves His5. The Mg(2+) site is built by Glu25 and Asp27. The active-site Nucleophile is His41. Cystine bridges form between Cys45–Cys51 and Cys47–Cys191. Residue Asp85 coordinates Mg(2+).

The protein belongs to the arthropod phospholipase D family. Class II subfamily. It depends on Mg(2+) as a cofactor. Expressed by the venom gland.

It is found in the secreted. The catalysed reaction is an N-(acyl)-sphingosylphosphocholine = an N-(acyl)-sphingosyl-1,3-cyclic phosphate + choline. The enzyme catalyses an N-(acyl)-sphingosylphosphoethanolamine = an N-(acyl)-sphingosyl-1,3-cyclic phosphate + ethanolamine. It carries out the reaction a 1-acyl-sn-glycero-3-phosphocholine = a 1-acyl-sn-glycero-2,3-cyclic phosphate + choline. It catalyses the reaction a 1-acyl-sn-glycero-3-phosphoethanolamine = a 1-acyl-sn-glycero-2,3-cyclic phosphate + ethanolamine. Functionally, dermonecrotic toxins cleave the phosphodiester linkage between the phosphate and headgroup of certain phospholipids (sphingolipid and lysolipid substrates), forming an alcohol (often choline) and a cyclic phosphate. This toxin acts on sphingomyelin (SM). It may also act on ceramide phosphoethanolamine (CPE), lysophosphatidylcholine (LPC) and lysophosphatidylethanolamine (LPE), but not on lysophosphatidylserine (LPS), and lysophosphatidylglycerol (LPG). It acts by transphosphatidylation, releasing exclusively cyclic phosphate products as second products. Induces dermonecrosis, hemolysis, increased vascular permeability, edema, inflammatory response, and platelet aggregation. The protein is Dermonecrotic toxin LapSicTox-alphaII1 of Loxosceles apachea (Apache recluse spider).